A 127-amino-acid chain; its full sequence is MAYGQKILKGDAYKRAAIKRRHIRIRKNLSGTAERPRLVVTRSNRHIVAQVIDDIKGHTLASASTLDTSIRGGEADKSAQAKQVGALVAERAKAAGVEAVVFDRGGNQYAGRIAALADAAREAGLKF.

This sequence belongs to the universal ribosomal protein uL18 family. As to quaternary structure, part of the 50S ribosomal subunit; part of the 5S rRNA/L5/L18/L25 subcomplex. Contacts the 5S and 23S rRNAs.

In terms of biological role, this is one of the proteins that bind and probably mediate the attachment of the 5S RNA into the large ribosomal subunit, where it forms part of the central protuberance. In Streptomyces coelicolor (strain ATCC BAA-471 / A3(2) / M145), this protein is Large ribosomal subunit protein uL18.